Consider the following 248-residue polypeptide: UPF0736 protein BCB4264_A1231 (248 aa).

Belongs to the UPF0736 family.

The polypeptide is UPF0736 protein BCB4264_A1231 (Bacillus cereus (strain B4264)).